The sequence spans 211 residues: Protein-methionine-sulfoxide reductase heme-binding subunit MsrQ (211 aa).

A run of 5 helical transmembrane segments spans residues 10–30 (WLKV…AWAI), 82–102 (LWCF…ELGV), 116–136 (PYLT…FTST), 153–173 (FVYL…KIIS), and 178–198 (IYAG…LSLF).

Belongs to the MsrQ family. As to quaternary structure, heterodimer of a catalytic subunit (MsrP) and a heme-binding subunit (MsrQ). FMN serves as cofactor. It depends on heme b as a cofactor.

It is found in the cell inner membrane. Functionally, part of the MsrPQ system that repairs oxidized periplasmic proteins containing methionine sulfoxide residues (Met-O), using respiratory chain electrons. Thus protects these proteins from oxidative-stress damage caused by reactive species of oxygen and chlorine generated by the host defense mechanisms. MsrPQ is essential for the maintenance of envelope integrity under bleach stress, rescuing a wide series of structurally unrelated periplasmic proteins from methionine oxidation, including the primary periplasmic chaperone SurA and the lipoprotein Pal. MsrQ provides electrons for reduction to the reductase catalytic subunit MsrP, using the quinone pool of the respiratory chain. This is Protein-methionine-sulfoxide reductase heme-binding subunit MsrQ from Escherichia coli (strain UTI89 / UPEC).